We begin with the raw amino-acid sequence, 366 residues long: DNA-directed RNA polymerase subunit alpha (366 aa).

Residues 1-260 (MAISDNGGGS…DQLQSFIGSE (260 aa)) are alpha N-terminal domain (alpha-NTD). An alpha C-terminal domain (alpha-CTD) region spans residues 274–366 (EGALPYDHNL…ENLSKQYSED (93 aa)).

The protein belongs to the RNA polymerase alpha chain family. In terms of assembly, homodimer. The RNAP catalytic core consists of 2 alpha, 1 beta, 1 beta' and 1 omega subunit. When a sigma factor is associated with the core the holoenzyme is formed, which can initiate transcription.

It carries out the reaction RNA(n) + a ribonucleoside 5'-triphosphate = RNA(n+1) + diphosphate. In terms of biological role, DNA-dependent RNA polymerase catalyzes the transcription of DNA into RNA using the four ribonucleoside triphosphates as substrates. The sequence is that of DNA-directed RNA polymerase subunit alpha from Anaplasma marginale (strain St. Maries).